The primary structure comprises 344 residues: 4-hydroxy-3-methylbut-2-en-1-yl diphosphate synthase (flavodoxin) (344 aa).

Residues C253, C256, C288, and E295 each coordinate [4Fe-4S] cluster.

This sequence belongs to the IspG family. [4Fe-4S] cluster is required as a cofactor.

It carries out the reaction (2E)-4-hydroxy-3-methylbut-2-enyl diphosphate + oxidized [flavodoxin] + H2O + 2 H(+) = 2-C-methyl-D-erythritol 2,4-cyclic diphosphate + reduced [flavodoxin]. It participates in isoprenoid biosynthesis; isopentenyl diphosphate biosynthesis via DXP pathway; isopentenyl diphosphate from 1-deoxy-D-xylulose 5-phosphate: step 5/6. Functionally, converts 2C-methyl-D-erythritol 2,4-cyclodiphosphate (ME-2,4cPP) into 1-hydroxy-2-methyl-2-(E)-butenyl 4-diphosphate. The chain is 4-hydroxy-3-methylbut-2-en-1-yl diphosphate synthase (flavodoxin) from Thermotoga maritima (strain ATCC 43589 / DSM 3109 / JCM 10099 / NBRC 100826 / MSB8).